Here is a 383-residue protein sequence, read N- to C-terminus: Ceramide synthase 3 (383 aa).

A helical membrane pass occupies residues Val-32 to Ile-52. Residues Lys-66–Ser-127 form a homeobox-like region. The TLC domain maps to Lys-130–Phe-331. 5 helical membrane passes run Phe-139–Leu-159, Leu-174–Phe-194, Phe-205–Ala-225, Phe-264–Leu-284, and Phe-298–Trp-318. Over Gly-319–His-383 the chain is Cytoplasmic. Ser-340 carries the post-translational modification Phosphoserine. Residues Asp-342–Glu-355 show a composition bias toward acidic residues. Residues Asp-342 to Asp-363 are disordered.

As to expression, expressed in the epidermis, where it localizes at the interface between the stratum granulosum and the stratum corneum (at protein level).

It is found in the endoplasmic reticulum membrane. It catalyses the reaction a very long-chain fatty acyl-CoA + a sphingoid base = an N-(very-long-chain fatty acyl)-sphingoid base + CoA + H(+). The catalysed reaction is docosanoyl-CoA + sphinganine = N-docosanoylsphinganine + CoA + H(+). It carries out the reaction tetracosanoyl-CoA + sphinganine = N-tetracosanoylsphinganine + CoA + H(+). The enzyme catalyses hexacosanoyl-CoA + sphinganine = N-hexacosanoylsphinganine + CoA + H(+). It catalyses the reaction 2-hydroxydocosanoyl-CoA + sphinganine = N-(2-hydroxydocosanoyl)-sphinganine + CoA + H(+). The catalysed reaction is 2-hydroxytetracosanoyl-CoA + sphinganine = N-(2-hydroxytetracosanoyl)-sphinganine + CoA + H(+). It carries out the reaction an ultra-long-chain fatty acyl-CoA + a sphingoid base = an N-(ultra-long-chain-acyl)-sphingoid base + CoA + H(+). The enzyme catalyses octacosanoyl-CoA + sphinganine = N-(octacosanoyl)-sphinganine + CoA + H(+). It catalyses the reaction a fatty acyl-CoA + sphing-4-enine = an N-acylsphing-4-enine + CoA + H(+). The catalysed reaction is sphinganine + octadecanoyl-CoA = N-(octadecanoyl)-sphinganine + CoA + H(+). It carries out the reaction 2-hydroxyoctadecanoyl-CoA + sphinganine = N-(2-hydroxyoctadecanoyl)-sphinganine + CoA + H(+). The protein operates within lipid metabolism; sphingolipid metabolism. Ceramide synthase that catalyzes the transfer of the acyl chain from acyl-CoA to a sphingoid base, with high selectivity toward very- and ultra-long-chain fatty acyl-CoA (chain length greater than C22). N-acylates sphinganine and sphingosine bases to form dihydroceramides and ceramides in de novo synthesis and salvage pathways, respectively. It is crucial for the synthesis of ultra-long-chain ceramides in the epidermis, to maintain epidermal lipid homeostasis and terminal differentiation. The polypeptide is Ceramide synthase 3 (Homo sapiens (Human)).